Consider the following 156-residue polypeptide: RNA polymerase sigma factor SigS (156 aa).

The Polymerase core binding signature appears at 29-44 (EYYQLLLIKMWQLSQI). Residues 126 to 145 (QYEIADIMSLSTSTIKLIKA) constitute a DNA-binding region (H-T-H motif).

This sequence belongs to the sigma-70 factor family.

Sigma factors are initiation factors that promote the attachment of RNA polymerase to specific initiation sites and are then released. Sigma-S contributes to the protection against external stress, thus playing a role in cellular fitness and survival. This Staphylococcus aureus (strain MRSA252) protein is RNA polymerase sigma factor SigS (sigS).